Here is a 288-residue protein sequence, read N- to C-terminus: MSGNLDILALKDDDVTKMLAATTHVGSTSVNFQMESYVYKRRPDGVHIINLGRTWEKLLLAARCIASIEYPGEVFAISSRPYGQRAVLKFAHYTEATPTAGRFTPGAFTNQIQPAFREPRLLIVTDPLTDHQPVTEASYVNIPVIAFCNTDSPLKFVDIAIPCNNKSPHSIGLMWWLLAREVLRLRGKITHDKWDIKPDLFFYRDPEEAEKEQAALEAAPAAKDLYPEEPIVVDETNWAGEDAALPAVAAAPAAVAAAPAALPQLVQADDWNEDETQTAGSWGGGGGF.

Belongs to the universal ribosomal protein uS2 family. Component of the small ribosomal subunit. Mature ribosomes consist of a small (40S) and a large (60S) subunit. The 40S subunit contains about 33 different proteins and 1 molecule of RNA (18S). The 60S subunit contains about 49 different proteins and 3 molecules of RNA (28S, 5.8S and 5S). Interacts with ribosomal protein S21.

Its subcellular location is the cytoplasm. Required for the assembly and/or stability of the 40S ribosomal subunit. Required for the processing of the 20S rRNA-precursor to mature 18S rRNA in a late step of the maturation of 40S ribosomal subunits. In Aedes aegypti (Yellowfever mosquito), this protein is Small ribosomal subunit protein uS2.